Consider the following 613-residue polypeptide: Zinc finger protein 665 (613 aa).

18 consecutive C2H2-type zinc fingers follow at residues 113–135, 141–163, 169–191, 197–219, 225–247, 253–275, 281–303, 309–331, 337–359, 365–387, 393–415, 421–443, 449–471, 477–499, 505–527, 533–555, 561–583, and 589–611; these read YKCDECGKVFNQNSRLTSHKRIH, YRCNECGKAFTVRSNLTIHQVIH, YKCNECGKVFSQPSNLAGHQRIH, YKCNECGKAFRAHSKLTTHQVIH, YKCNECGKCFTQNSHLASHRRIH, YKCNECGKAFSVRSSLTTHQTIH, YKCNECGKVFRHNSYLTKHRRVH, YKCNECGKAFSMHSNLTKHQIIH, FKCNECVKVFTQYSHLANHRRIH, YRCDECGKAFSVRSSLTTHQAIH, YKCNDCGKVFTQNSHLASHRGIH, YKCDECGKAFSQTSQLARHWRVH, YKCNECGKAFSVHSSLTTHQTIH, YKCNDCGKVFRHNSYLAVHQRIH, YKCNECGKAFSVHSNLATHQVIH, YKCNECGKVFTQNSHLANHRRIH, YRCNECGKAFSVRSTLTTHMAIH, and YKCNECGKVFTQNSNLAKHRRIH.

Belongs to the krueppel C2H2-type zinc-finger protein family.

The protein localises to the nucleus. Its function is as follows. May be involved in transcriptional regulation. The polypeptide is Zinc finger protein 665 (ZNF665) (Pongo abelii (Sumatran orangutan)).